The primary structure comprises 1234 residues: DNA-directed RNA polymerase subunit beta (1234 aa).

Positions 1169-1234 (ESVDEDADEL…LDLDDFGDEH (66 aa)) are disordered. Composition is skewed to acidic residues over residues 1171–1180 (VDEDADELEV) and 1191–1234 (EKEE…GDEH).

Belongs to the RNA polymerase beta chain family. The RNAP catalytic core consists of 2 alpha, 1 beta, 1 beta' and 1 omega subunit. When a sigma factor is associated with the core the holoenzyme is formed, which can initiate transcription.

The enzyme catalyses RNA(n) + a ribonucleoside 5'-triphosphate = RNA(n+1) + diphosphate. In terms of biological role, DNA-dependent RNA polymerase catalyzes the transcription of DNA into RNA using the four ribonucleoside triphosphates as substrates. The chain is DNA-directed RNA polymerase subunit beta from Clostridium botulinum (strain Langeland / NCTC 10281 / Type F).